The primary structure comprises 305 residues: MTTDDDSAPFGRSLCAMVTPFTGSGALDLDGAQRLADRLVARGCDGLVLSGTTGESPTTTDAEKAALVTAVREAVGDRAALVAGVGTADTRHTVELALAAEKAGADGLLVVAPYYSRPPQDALEAHFREVADASGLPVMLYDIPGRTGTRIEPDTVVRLAAHPRIVAVKDCAYDLLGTQKVLSRTGLAYYAGCDEQILPLYAIGAAGYVSTVANVVPELFRAVLDAFDAGDTGRAALLQRRAVPLVESMMAAGLPGTVTAKALLGALGLPAGPVRAPLRSADRETTAGLLAAYGELAADAGQSQA.

Threonine 53 is a pyruvate binding site. Tyrosine 141 acts as the Proton donor/acceptor in catalysis. Catalysis depends on lysine 169, which acts as the Schiff-base intermediate with substrate. Position 209 (valine 209) interacts with pyruvate.

The protein belongs to the DapA family. In terms of assembly, homotetramer; dimer of dimers.

The protein resides in the cytoplasm. The catalysed reaction is L-aspartate 4-semialdehyde + pyruvate = (2S,4S)-4-hydroxy-2,3,4,5-tetrahydrodipicolinate + H2O + H(+). Its pathway is amino-acid biosynthesis; L-lysine biosynthesis via DAP pathway; (S)-tetrahydrodipicolinate from L-aspartate: step 3/4. In terms of biological role, catalyzes the condensation of (S)-aspartate-beta-semialdehyde [(S)-ASA] and pyruvate to 4-hydroxy-tetrahydrodipicolinate (HTPA). This Streptomyces coelicolor (strain ATCC BAA-471 / A3(2) / M145) protein is 4-hydroxy-tetrahydrodipicolinate synthase 1.